The primary structure comprises 246 residues: Protein YIPF4 (246 aa).

Over 1-115 (MQPPGPPPAY…FNRQVVRDNP (115 aa)) the chain is Cytoplasmic. The helical transmembrane segment at 116-136 (DFWGPLAVVLFFSMISLYGQF) threads the bilayer. Residues 137 to 140 (RVVS) lie on the Lumenal side of the membrane. Residues 141–161 (WIITIWIFGSLTIFLLARVLG) traverse the membrane as a helical segment. The Cytoplasmic portion of the chain corresponds to 162 to 168 (GEVAYGQ). A helical transmembrane segment spans residues 169–189 (VLGVIGYSLLPLIVIAPILLV). Residues 190 to 197 (VGSFEMVS) lie on the Lumenal side of the membrane. Residues 198 to 218 (TLIKLFGVFWAAYSAASLLVG) form a helical membrane-spanning segment. Over 219–225 (EEFKTKK) the chain is Cytoplasmic. Residues 226–246 (PLLIYPIFLLYIYFLSLYTGV) form a helical membrane-spanning segment.

This sequence belongs to the YIP1 family. As to quaternary structure, interacts with YIPF3 and YIPF5.

It localises to the golgi apparatus. The protein localises to the cis-Golgi network membrane. Functionally, involved in the maintenance of the Golgi structure. In Mus musculus (Mouse), this protein is Protein YIPF4 (Yipf4).